We begin with the raw amino-acid sequence, 521 residues long: Lysine--tRNA ligase (521 aa).

The short motif at 32-40 (PSGTVHIGN) is the 'HIGH' region element. The 'KMSKS' region signature appears at 280-284 (KISSS).

Belongs to the class-I aminoacyl-tRNA synthetase family.

It localises to the cytoplasm. The catalysed reaction is tRNA(Lys) + L-lysine + ATP = L-lysyl-tRNA(Lys) + AMP + diphosphate. The sequence is that of Lysine--tRNA ligase (lysS) from Borreliella burgdorferi (strain ATCC 35210 / DSM 4680 / CIP 102532 / B31) (Borrelia burgdorferi).